The following is a 66-amino-acid chain: Large ribosomal subunit protein uL29 (66 aa).

Belongs to the universal ribosomal protein uL29 family.

This chain is Large ribosomal subunit protein uL29, found in Bartonella tribocorum (strain CIP 105476 / IBS 506).